Reading from the N-terminus, the 908-residue chain is 26S proteasome non-ATPase regulatory subunit 2 (908 aa).

M1 is subject to N-acetylmethionine. Residues 1-52 are disordered; the sequence is MEEGGRDKAPLQPQQPPATSPGSGDEKPSGKERRDAGDKDKEQELSEEDKQL. The segment covering 24–52 has biased composition (basic and acidic residues); sequence GDEKPSGKERRDAGDKDKEQELSEEDKQL. S29 and S147 each carry phosphoserine. Y194 is modified (phosphotyrosine). Phosphoserine occurs at positions 361 and 363. PC repeat units lie at residues 409–442, 443–479, 480–514, 517–551, and 560–589; these read SAAA…YIKS, GALL…TMRL, GSIF…SMEV, VTAL…TELK, and LGLG…PFRS. K551 bears the N6-acetyllysine mark. A compositionally biased stretch (basic and acidic residues) spans 623–643; the sequence is KEKEEDKDKKEKKDKDKKEAP. The disordered stretch occupies residues 623–645; sequence KEKEEDKDKKEKKDKDKKEAPAD. PC repeat units follow at residues 692–723 and 742–757; these read LALA…EVSY and AAML…KDPN. The tract at residues 708-903 is required for interaction with UBLCP1; that stretch reads DTLSKFSHDA…LEGFVILRKN (196 aa).

It belongs to the proteasome subunit S2 family. As to quaternary structure, component of the 19S proteasome regulatory particle complex. The 26S proteasome consists of a 20S core particle (CP) and two 19S regulatory subunits (RP). The regulatory particle is made of a lid composed of 9 subunits, a base containing 6 ATPases and few additional components including PSMD2. Interacts with RPGRIP1L. Interacts with CRY1 in a KDM8-dependent manner. Interacts (via C-terminus) with phosphatase UBLCP1 (via ubiquitin-like domain); the interaction recruits UBLCP1 to the 19S regulatory particle where it dephosphorylates 19S subunit PSMC2/RPT1 which impairs PSMC2 ATPase activity and disrupts 26S proteasome assembly.

Functionally, component of the 26S proteasome, a multiprotein complex involved in the ATP-dependent degradation of ubiquitinated proteins. This complex plays a key role in the maintenance of protein homeostasis by removing misfolded or damaged proteins, which could impair cellular functions, and by removing proteins whose functions are no longer required. Therefore, the proteasome participates in numerous cellular processes, including cell cycle progression, apoptosis, or DNA damage repair. Its function is as follows. Binds to the intracellular domain of tumor necrosis factor type 1 receptor. The binding domain of TRAP1 and TRAP2 resides outside the death domain of TNFR1. This is 26S proteasome non-ATPase regulatory subunit 2 (PSMD2) from Bos taurus (Bovine).